A 141-amino-acid polypeptide reads, in one-letter code: Large ribosomal subunit protein uL11 (141 aa).

It belongs to the universal ribosomal protein uL11 family. As to quaternary structure, part of the ribosomal stalk of the 50S ribosomal subunit. Interacts with L10 and the large rRNA to form the base of the stalk. L10 forms an elongated spine to which L12 dimers bind in a sequential fashion forming a multimeric L10(L12)X complex. In terms of processing, one or more lysine residues are methylated.

In terms of biological role, forms part of the ribosomal stalk which helps the ribosome interact with GTP-bound translation factors. The chain is Large ribosomal subunit protein uL11 from Synechococcus elongatus (strain ATCC 33912 / PCC 7942 / FACHB-805) (Anacystis nidulans R2).